The chain runs to 210 residues: Orotate phosphoribosyltransferase (210 aa).

Residues arginine 97, lysine 101, histidine 103, and 123–131 (EDLISTGGS) contribute to the 5-phospho-alpha-D-ribose 1-diphosphate site. Serine 127 contacts orotate.

Belongs to the purine/pyrimidine phosphoribosyltransferase family. PyrE subfamily. Homodimer. The cofactor is Mg(2+).

It catalyses the reaction orotidine 5'-phosphate + diphosphate = orotate + 5-phospho-alpha-D-ribose 1-diphosphate. Its pathway is pyrimidine metabolism; UMP biosynthesis via de novo pathway; UMP from orotate: step 1/2. In terms of biological role, catalyzes the transfer of a ribosyl phosphate group from 5-phosphoribose 1-diphosphate to orotate, leading to the formation of orotidine monophosphate (OMP). This Enterococcus faecalis (strain ATCC 700802 / V583) protein is Orotate phosphoribosyltransferase.